The sequence spans 465 residues: MGRTLAEKVWDAHVVRRADGEPDLLYIDLHLVHEVTSPQAFEALRLAGRPVRRPELTLATEDHNVPTTDTLAPIADPISAAQVEALRKNCAEFGVRLYPMNDPGQGIVHVVGPQLGLSQPGMTIVCGDSHTSTHGAFGALAFGIGTSQVEHVLATQTLPQRRPKTMAITVAGDLPVGVSAKDLILAIIARIGTGGGAGHVIEYRGAAIRALSMEGRMTVCNMSIEAGARAGMIAPDDVTFEYLAGRPRVATGAAWEEAVAYWRTLASDSDAVFDREVVIDAASLTPYVTWGTNPGQAAPLGSLVPAPADYPDAAARASVERALTYMGLTPGTPLSDVTVDTVFIGSCTNGRLSDLRAAADVLRGRRVSEGVRVLIVPGSMAVKAQAEAEGLDEVFRAAGAQWRSAGCSMCLGMNPDTLRPGERSASTSNRNFEGRQGPGGRTHLVSPAVAAATAVTGRLTAPADL.

Residues Cys-347, Cys-407, and Cys-410 each coordinate [4Fe-4S] cluster. The segment at 416-443 (DTLRPGERSASTSNRNFEGRQGPGGRTH) is disordered.

Belongs to the aconitase/IPM isomerase family. LeuC type 1 subfamily. As to quaternary structure, heterodimer of LeuC and LeuD. Requires [4Fe-4S] cluster as cofactor.

It carries out the reaction (2R,3S)-3-isopropylmalate = (2S)-2-isopropylmalate. It participates in amino-acid biosynthesis; L-leucine biosynthesis; L-leucine from 3-methyl-2-oxobutanoate: step 2/4. Its function is as follows. Catalyzes the isomerization between 2-isopropylmalate and 3-isopropylmalate, via the formation of 2-isopropylmaleate. The polypeptide is 3-isopropylmalate dehydratase large subunit (Frankia casuarinae (strain DSM 45818 / CECT 9043 / HFP020203 / CcI3)).